A 320-amino-acid polypeptide reads, in one-letter code: tRNA dimethylallyltransferase (320 aa).

ATP is bound at residue 17–24 (GPTAVGKT). 19–24 (TAVGKT) contributes to the substrate binding site. The tract at residues 42–45 (DSMQ) is interaction with substrate tRNA.

The protein belongs to the IPP transferase family. Monomer. Mg(2+) serves as cofactor.

The enzyme catalyses adenosine(37) in tRNA + dimethylallyl diphosphate = N(6)-dimethylallyladenosine(37) in tRNA + diphosphate. Its function is as follows. Catalyzes the transfer of a dimethylallyl group onto the adenine at position 37 in tRNAs that read codons beginning with uridine, leading to the formation of N6-(dimethylallyl)adenosine (i(6)A). The protein is tRNA dimethylallyltransferase of Bacillus thuringiensis (strain Al Hakam).